A 327-amino-acid polypeptide reads, in one-letter code: Sugar transporter ERD6-like 9 (327 aa).

8 helical membrane passes run 26–46 (FLVFTTFIIVSASFSFGVALG), 68–88 (VFGSLLTFGGMIGALFSATIA), 102–122 (VFCISGWLAIALAKNIIWLDL), 125–145 (FFVGIGVGLLSYVVPVYIAEI), 152–172 (GTFTFSNQLLQNCGVATAYYL), 180–200 (IIALIGILPCLIQLVGLFFVP), 260–280 (LTIGIGLMLLQQLSGSAGLGY), and 295–315 (IGMTVLSIVVVPKAILGLILV).

It belongs to the major facilitator superfamily. Sugar transporter (TC 2.A.1.1) family.

The protein localises to the membrane. In terms of biological role, sugar transporter. The sequence is that of Sugar transporter ERD6-like 9 from Arabidopsis thaliana (Mouse-ear cress).